We begin with the raw amino-acid sequence, 152 residues long: Ribosome maturation factor RimP (152 aa).

It belongs to the RimP family.

The protein resides in the cytoplasm. Functionally, required for maturation of 30S ribosomal subunits. The polypeptide is Ribosome maturation factor RimP (Idiomarina loihiensis (strain ATCC BAA-735 / DSM 15497 / L2-TR)).